We begin with the raw amino-acid sequence, 341 residues long: Oxidoreductase swnN (341 aa).

Belongs to the NmrA-type oxidoreductase family. Isoflavone reductase subfamily.

It functions in the pathway mycotoxin biosynthesis. Its function is as follows. Oxidoreductase; part of the gene cluster that mediates the biosynthesis of swainsonine (SW), a cytotoxic fungal alkaloid and a potential cancer therapy drug. Swainsonine production occurs via a multibranched pathway and is dispensable for fungal colonization of plants and infection of insect hosts. The first step of swainsonine biosynthesis is the production of the precursor pipecolic acid (PA) via conversion of L-lysine (Lys) to 1-piperideine-6-carboxylate (P6C) by the aminotransferase swnA, the latter being further reduced to PA by the reductase swnR. PA can be converted from lysine by both the SW biosynthetic cluster and the unclustered genes such as lysine cyclodeaminase. The PKS-NRPS hybrid synthetase swnK uptakes and condensates PA and malonyl-CoA with and without skipping of the ketoreductase (KR) domain in order to produce 3 intermediates, 1-oxoindolizidine, (1S)-1-hydroxyindolizin, and (1R)-1-hydroxyindolizine; with the transisomer (1S)-1-hydroxyindolizin being predominant. The terminal thioester reductase (TE) domain of swnK is involved in reduction of the thioester bond to release the intermediate aldehydes. The oxidoreductase swnN could contribute to the reduction of 1-oxoindolizidine to (1S)-1-hydroxyindolizin and (1R)-1-hydroxyindolizine, contributing to the major route of SW production. The dioxygenase swnH2 would be responsible for the oxidization of (1R)-1-hydroxyindolizine into (1R,2S)-1,2-dihydroxyindolizine and of (1S)-1-hydroxyindolizin to yield both (1R,2S)-1,2-dihydroxyindolizine and (1S,2S)-1,2-dihydroxyindolizine. The dioxygenase swnH1 then performs the conversion of the 1,2-dihydroxyindolizine epimers to SW. This is Oxidoreductase swnN from Metarhizium robertsii (strain ARSEF 23 / ATCC MYA-3075) (Metarhizium anisopliae (strain ARSEF 23)).